A 474-amino-acid chain; its full sequence is Synaptotagmin 1 (474 aa).

Disordered regions lie at residues 1–49 (MPPN…DRQE) and 63–84 (QRIA…ESTT). Residues 1-107 (MPPNAKSETD…EVVTEVIAER (107 aa)) are Vesicular-facing. The span at 30–49 (VDQKLEETHHSKFREVDRQE) shows a compositional bias: basic and acidic residues. The span at 69-84 (ESTTRSATTEAQESTT) shows a compositional bias: low complexity. A helical transmembrane segment spans residues 108–134 (TGLPTWGVVAIIILVFLVVFGIIFFCV). The Cytoplasmic segment spans residues 135–474 (RRFLKKRRTK…ETDEILKNMK (340 aa)). The tract at residues 170-189 (PDMEELTENAEEGDEEDKQS) is disordered. A compositionally biased stretch (acidic residues) spans 171 to 187 (DMEELTENAEEGDEEDK). Residues 186-434 (DKQSEQKLGR…PIGRCILGCM (249 aa)) are phospholipid binding. C2 domains are found at residues 192 to 312 (KLGR…EEWR) and 325 to 458 (KLGD…AQWH). Ca(2+)-binding residues include Leu-222, Asp-223, Asp-229, Asp-282, Phe-283, Asp-284, Ser-287, Lys-288, Asp-290, Asp-356, Asp-362, Asp-416, and Asp-418.

Belongs to the synaptotagmin family. As to quaternary structure, homodimer or homotrimer (Potential). Identified in a complex with Syn and nwk. Interacts with StnA and StnB via its second C2 domain. This interaction may mediate its retrieval from the plasma membrane, thereby facilitating the internalization of multiple synaptic vesicles from the plasma membrane. The cofactor is Ca(2+).

The protein resides in the cytoplasmic vesicle. Its subcellular location is the secretory vesicle. It is found in the synaptic vesicle membrane. It localises to the synapse. Functionally, may have a regulatory role in the membrane interactions during trafficking of synaptic vesicles at the active zone of the synapse. It binds acidic phospholipids with a specificity that requires the presence of both an acidic head group and a diacyl backbone. The protein is Synaptotagmin 1 (Syt1) of Drosophila melanogaster (Fruit fly).